The primary structure comprises 318 residues: MVSTYLLANFGGPRHSHDVEVFLTSLLTDRDVTGGCLPSFLHKRLFSFIAKKRAPKVVPQYNCIGGYSPIYQDTEALAKTLSSHLDAPVITFHRYLPDTHSQTIQQLKTLGDLPVVGVPLFPHFTYAVTGSIVRFIHNHLPSLNISWVAHFGNHPQFISCMIDHILEFLQSHDIPTHDCCLLFSAHGLPMRYVNKGDPYNVQCEKSFAAISERLPNIETFLCYQSKFGLGKWLTPSTKEVCKTLKTNKKYVLIVPFGFTSDHIETLYEIEKEYIAILIDRKYQALRVPAIYQSPQWVQSLATIIQSTRYVEKHSLIKS.

Fe cation-binding residues include His186 and Glu264.

Belongs to the ferrochelatase family.

The protein resides in the cytoplasm. It catalyses the reaction heme b + 2 H(+) = protoporphyrin IX + Fe(2+). The protein operates within porphyrin-containing compound metabolism; protoheme biosynthesis; protoheme from protoporphyrin-IX: step 1/1. In terms of biological role, catalyzes the ferrous insertion into protoporphyrin IX. This Chlamydia abortus (strain DSM 27085 / S26/3) (Chlamydophila abortus) protein is Ferrochelatase.